Consider the following 273-residue polypeptide: Bis(5'-nucleosyl)-tetraphosphatase, symmetrical (273 aa).

It belongs to the Ap4A hydrolase family.

The enzyme catalyses P(1),P(4)-bis(5'-adenosyl) tetraphosphate + H2O = 2 ADP + 2 H(+). Functionally, hydrolyzes diadenosine 5',5'''-P1,P4-tetraphosphate to yield ADP. The sequence is that of Bis(5'-nucleosyl)-tetraphosphatase, symmetrical from Histophilus somni (strain 129Pt) (Haemophilus somnus).